The chain runs to 558 residues: Glucose-6-phosphate isomerase (558 aa).

At Ala2 the chain carries N-acetylalanine. Lys12 is modified (N6-acetyllysine). The residue at position 34 (Lys34) is an N6-(2-hydroxyisobutyryl)lysine. Position 107 is a phosphoserine (Ser107). A Phosphothreonine modification is found at Thr109. Lys142 bears the N6-acetyllysine mark. 159–160 (GS) lines the D-glucose 6-phosphate pocket. Ser185 is modified (phosphoserine; by CK2). 210-215 (SKTFTT) contacts D-glucose 6-phosphate. Thr250 carries the post-translational modification Phosphothreonine. Residues Gln354, Glu358, and His389 each contribute to the D-glucose 6-phosphate site. Glu358 (proton donor) is an active-site residue. His389 is a catalytic residue. Lys454 bears the N6-acetyllysine; alternate mark. Lys454 carries the N6-malonyllysine; alternate modification. An N6-succinyllysine; alternate modification is found at Lys454. The residue at position 455 (Ser455) is a Phosphoserine. Lys519 is a binding site for D-glucose 6-phosphate. Lys519 is an active-site residue.

This sequence belongs to the GPI family. Homodimer; in the catalytically active form. Monomer in the secreted form. Post-translationally, phosphorylation at Ser-185 by CK2 has been shown to decrease enzymatic activity and may contribute to secretion by a non-classical secretory pathway. In terms of processing, ISGylated.

Its subcellular location is the cytoplasm. The protein localises to the secreted. The catalysed reaction is alpha-D-glucose 6-phosphate = beta-D-fructose 6-phosphate. The protein operates within carbohydrate degradation; glycolysis; D-glyceraldehyde 3-phosphate and glycerone phosphate from D-glucose: step 2/4. With respect to regulation, strongly inhibited by erythrose 4-phosphate. In the cytoplasm, catalyzes the conversion of glucose-6-phosphate to fructose-6-phosphate, the second step in glycolysis, and the reverse reaction during gluconeogenesis. Besides it's role as a glycolytic enzyme, also acts as a secreted cytokine: acts as an angiogenic factor (AMF) that stimulates endothelial cell motility. Acts as a neurotrophic factor, neuroleukin, for spinal and sensory neurons. It is secreted by lectin-stimulated T-cells and induces immunoglobulin secretion. The chain is Glucose-6-phosphate isomerase from Homo sapiens (Human).